A 316-amino-acid polypeptide reads, in one-letter code: MQILLANPRGFCAGVDRAISIVENALAIYGAPIYVRHEVVHNRYVVDSLRERGAIFIEQISEVPDGAILIFSAHGVSQAVRNEAKSRDLTVFDATCPLVTKVHMEVARASRRGEESILIGHAGHPEVEGTMGQYSNPEGGMYLVESPDDVWKLTVKNEEKLSFMTQTTLSVDDTSDVIDALRKRFPKIVGPRKDDICYATTNRQEAVRALAEQAEVVLVVGSKNSSNSNRLAELAQRMGKRAFLIDDATDIQEEWVKEAKCVGVTAGASAPDILVQNVVARLQQLGGGEAIPLEGREENIVFEVPKELRVDIREVD.

Cysteine 12 serves as a coordination point for [4Fe-4S] cluster. Positions 41 and 74 each coordinate (2E)-4-hydroxy-3-methylbut-2-enyl diphosphate. Positions 41 and 74 each coordinate dimethylallyl diphosphate. Isopentenyl diphosphate-binding residues include histidine 41 and histidine 74. Cysteine 96 is a binding site for [4Fe-4S] cluster. Histidine 124 serves as a coordination point for (2E)-4-hydroxy-3-methylbut-2-enyl diphosphate. Histidine 124 provides a ligand contact to dimethylallyl diphosphate. Histidine 124 contributes to the isopentenyl diphosphate binding site. Residue glutamate 126 is the Proton donor of the active site. Threonine 167 serves as a coordination point for (2E)-4-hydroxy-3-methylbut-2-enyl diphosphate. Cysteine 197 lines the [4Fe-4S] cluster pocket. (2E)-4-hydroxy-3-methylbut-2-enyl diphosphate contacts are provided by serine 225, serine 226, asparagine 227, and serine 269. 4 residues coordinate dimethylallyl diphosphate: serine 225, serine 226, asparagine 227, and serine 269. 4 residues coordinate isopentenyl diphosphate: serine 225, serine 226, asparagine 227, and serine 269.

This sequence belongs to the IspH family. As to quaternary structure, homodimer. [4Fe-4S] cluster is required as a cofactor.

The enzyme catalyses isopentenyl diphosphate + 2 oxidized [2Fe-2S]-[ferredoxin] + H2O = (2E)-4-hydroxy-3-methylbut-2-enyl diphosphate + 2 reduced [2Fe-2S]-[ferredoxin] + 2 H(+). The catalysed reaction is dimethylallyl diphosphate + 2 oxidized [2Fe-2S]-[ferredoxin] + H2O = (2E)-4-hydroxy-3-methylbut-2-enyl diphosphate + 2 reduced [2Fe-2S]-[ferredoxin] + 2 H(+). Its pathway is isoprenoid biosynthesis; dimethylallyl diphosphate biosynthesis; dimethylallyl diphosphate from (2E)-4-hydroxy-3-methylbutenyl diphosphate: step 1/1. The protein operates within isoprenoid biosynthesis; isopentenyl diphosphate biosynthesis via DXP pathway; isopentenyl diphosphate from 1-deoxy-D-xylulose 5-phosphate: step 6/6. Its function is as follows. Catalyzes the conversion of 1-hydroxy-2-methyl-2-(E)-butenyl 4-diphosphate (HMBPP) into a mixture of isopentenyl diphosphate (IPP) and dimethylallyl diphosphate (DMAPP). Acts in the terminal step of the DOXP/MEP pathway for isoprenoid precursor biosynthesis. The chain is 4-hydroxy-3-methylbut-2-enyl diphosphate reductase from Escherichia coli (strain UTI89 / UPEC).